Here is a 457-residue protein sequence, read N- to C-terminus: Putative purine-cytosine permease YxlA (457 aa).

The next 12 helical transmembrane spans lie at 24–44 (FPVW…TIPV), 50–70 (LFWS…FMAS), 90–110 (FGVI…LGFF), 127–147 (IPGS…TIFG), 164–184 (AVFF…GSWI), 192–212 (IFLV…PYVA), 228–248 (FWYS…LGAL), 264–284 (IVQL…FGQM), 316–336 (IIMI…GQSN), 341–361 (FLNF…INLV), 392–412 (IAFV…FYIG), and 420–440 (GGDI…YVLM).

This sequence belongs to the purine-cytosine permease (2.A.39) family.

It localises to the cell membrane. This Bacillus subtilis (strain 168) protein is Putative purine-cytosine permease YxlA (yxlA).